A 333-amino-acid polypeptide reads, in one-letter code: MDLINSTDYLINASTLVRNSTQFLAPASKMIIALSLYISSIIGTITNGLYLWVLRFKMKQTVNTLLFFHLILSYFISTMILPFMATSQLQDNHWNFGTALCKVFNGTLSLGMFTSVFFLSAIGLDRYLLTLHPVWSQQHRTPRWASSIVLGVWISAAALSIPYLIFRQTHHDRKGKVTCQNNYAVSTNWESKEMQALRQWIHVACFISRFLLGFLLPFFIIIFCYERVASKVKERSLFKSSKPFKVMMTAIISFFVCWMPYHIHQGLLLTMNQSLLLELTLILTVLTTSFNTIFSPTLYLFVGENFKKVFKKSILALFESTFSEDSSVERTQT.

At 1 to 30 (MDLINSTDYLINASTLVRNSTQFLAPASKM) the chain is on the extracellular side. 3 N-linked (GlcNAc...) asparagine glycosylation sites follow: Asn5, Asn12, and Asn19. A helical transmembrane segment spans residues 31–53 (IIALSLYISSIIGTITNGLYLWV). Over 54–64 (LRFKMKQTVNT) the chain is Cytoplasmic. The helical transmembrane segment at 65-86 (LLFFHLILSYFISTMILPFMAT) threads the bilayer. Topologically, residues 87 to 103 (SQLQDNHWNFGTALCKV) are extracellular. Cysteines 101 and 179 form a disulfide. A helical transmembrane segment spans residues 104 to 124 (FNGTLSLGMFTSVFFLSAIGL). Residues 125–143 (DRYLLTLHPVWSQQHRTPR) lie on the Cytoplasmic side of the membrane. Residues 144 to 165 (WASSIVLGVWISAAALSIPYLI) form a helical membrane-spanning segment. Over 166 to 209 (FRQTHHDRKGKVTCQNNYAVSTNWESKEMQALRQWIHVACFISR) the chain is Extracellular. The chain crosses the membrane as a helical span at residues 210-230 (FLLGFLLPFFIIIFCYERVAS). Residues 231-246 (KVKERSLFKSSKPFKV) are Cytoplasmic-facing. The helical transmembrane segment at 247-268 (MMTAIISFFVCWMPYHIHQGLL) threads the bilayer. At 269 to 283 (LTMNQSLLLELTLIL) the chain is on the extracellular side. An N-linked (GlcNAc...) asparagine glycan is attached at Asn272. The helical transmembrane segment at 284–303 (TVLTTSFNTIFSPTLYLFVG) threads the bilayer. At 304–333 (ENFKKVFKKSILALFESTFSEDSSVERTQT) the chain is on the cytoplasmic side.

Belongs to the G-protein coupled receptor 1 family.

It is found in the cell membrane. Functionally, orphan receptor; could be a chemoattractant receptor. This chain is Probable G-protein coupled receptor 33 (GPR33), found in Pan paniscus (Pygmy chimpanzee).